The sequence spans 1141 residues: MSGLSTVPDNINFAREEDKVAQKWQDENTFQRSVELSKDRPHFTFYDGPPFATGLPHYGHMLTSTIKDVVGRWAHQNGHYVERRFGWDTHGLPVEYEIDKTLGISGPQDVMKMGIANYNNECRKIVMRYSGEWEKTMGRLGRWVDFKHDYKTLYPWFMESVWWAFSELHKKGLVYKGVKVMPFSTACSTPLSNFEAGQNYKDVVDPAVFVGFKLLDCPNRQLVAWTTTPWTLPSNLALVVHPDMLYVVTKDKTTGIEYVVLEERLGELKNDNLEVIEKLAGSQLKDLRYEPLFPYFAYMREERNAFRVLNDTFVTSDSGTGVVHQAPYFGEIDFQVCVANGVIAKDQKMICPVDESGKYTSEVPDYQGVYVKDADKLIIKRLKEMGNLVRQAEVKHSYPFCWRSDTPLLYKAVPSWFINVETLIPRLLANNDETYWVPAFVKEKRFANWLRDARDWAVSRNRFWGTPINLWVSEDGEEVVCVGSIAELEELSGQKITDLHRESVDDVTIPSRSGRGVLKRVSEVFDCWFESGSMPYAQNHYPFENRKIFEDNFPADFIAEGIDQTRGWFYTLLVLSTALFNKPPFKNLICNGLVLASDGAKMSKSKKNYPDPMLIVNKYGADALRLYLINSPVVRGENLRFREEGVRDLLKDVFLPWFNAYRFFVQNVQAYEHETGNVFDMNVHVASENVMDRWIESFTNSLVAFVRKEMDSYRLYAVVGPLTKFFDTLTNIYIRLNRKRVKGDNGLHEQHHALAALGRVLILIVRLMAPFTPFFCEYIWLNLKKVIGSTEESVHFLMLPKPDESLIDETVERRVEVMRNVIDLVRLVRDREGLAVKYPLKEMIVINRDSQFLEDVKSLESYILLELNVRKLTVSQDKQKYGITLKAEPNFKILGARLKGEQKKVADYLKNQITESELEKFLLEGKLTVLGHELSSEEVAVSYAAGSDQGHGYKTHSDAKTIVMIDTTEDESLIEEGLCREVTNRVQRLRKQAKLVSTDTAHVHIVVSPADSQLAKVVAAKLNDIVSATGTPIKLGSPPAAAKAPTATSKSAIKDSEVELWLFAEGDSFDGITVVDGSKKVRVHVKTEKEHLKGYADLLYHVRSALDLWNGKIALKNVDGSAVHPTVDVTSLVGQTLQLVR.

A 'HIGH' region motif is present at residues 50–60 (PFATGLPHYGH). Positions 601-605 (KMSKS) match the 'KMSKS' region motif. Residue Lys-604 coordinates ATP.

This sequence belongs to the class-I aminoacyl-tRNA synthetase family.

Its subcellular location is the cytoplasm. It catalyses the reaction tRNA(Ile) + L-isoleucine + ATP = L-isoleucyl-tRNA(Ile) + AMP + diphosphate. This chain is Isoleucine--tRNA ligase, cytoplasmic, found in Caenorhabditis elegans.